The primary structure comprises 362 residues: Golgi-resident adenosine 3',5'-bisphosphate 3'-phosphatase (362 aa).

An N-acetylmethionine modification is found at Met1. Topologically, residues 1–12 (MAPMGIRLSPLG) are cytoplasmic. A helical transmembrane segment spans residues 13 to 33 (VAVFCLLGLGVLYHLYSGFLA). At 34-362 (GRFSLFGLGG…LPDLEKTGHK (329 aa)) the chain is on the lumenal side. A disordered region spans residues 88 to 109 (RESNVLHEKSKGKTREGADDKM). Asp113 (proton acceptor) is an active-site residue. Residues Glu136, Asp177, Leu179, and Asp180 each contribute to the Mg(2+) site. Thr182 (proton acceptor) is an active-site residue. Residues Ser245 and His248 each contribute to the AMP site. Asn262 carries an N-linked (GlcNAc...) asparagine glycan. AMP is bound by residues Gly271 and Lys275. A Mg(2+)-binding site is contributed by Asp303.

Belongs to the inositol monophosphatase superfamily. Requires Mg(2+) as cofactor. Contains N-linked glycan resistant to endoglycosydase H.

The protein localises to the golgi apparatus. Its subcellular location is the trans-Golgi network membrane. It carries out the reaction adenosine 3',5'-bisphosphate + H2O = AMP + phosphate. It participates in sulfur metabolism. Strongly inhibited by lithium. Exhibits 3'-nucleotidase activity toward adenosine 3',5'-bisphosphate (PAP), namely hydrolyzes adenosine 3',5'-bisphosphate into adenosine 5'-monophosphate (AMP) and a phosphate. May play a role in the formation of skeletal elements derived through endochondral ossification, possibly by clearing adenosine 3',5'-bisphosphate produced by Golgi sulfotransferases during glycosaminoglycan sulfation. Has no activity toward 3'-phosphoadenosine 5'-phosphosulfate (PAPS) or inositol phosphate (IP) substrates including I(1)P, I(1,4)P2, I(1,3,4)P3, I(1,4,5)P3 and I(1,3,4,5)P4. The protein is Golgi-resident adenosine 3',5'-bisphosphate 3'-phosphatase (BPNT2) of Bos taurus (Bovine).